The primary structure comprises 371 residues: uncharacterized protein (371 aa).

The stretch at 287-323 (EVVTALDRYRQHLRETRERLEEKQGKLLEELKGYESM) forms a coiled coil.

This is an uncharacterized protein from Aspergillus fumigatus (strain ATCC MYA-4609 / CBS 101355 / FGSC A1100 / Af293) (Neosartorya fumigata).